A 142-amino-acid polypeptide reads, in one-letter code: Peptide methionine sulfoxide reductase MsrB (142 aa).

In terms of domain architecture, MsrB spans 10 to 132 (EEEWKKVLTP…NSVSLNFKTE (123 aa)). Zn(2+)-binding residues include Cys49, Cys52, Cys98, and Cys101. Cys121 serves as the catalytic Nucleophile.

This sequence belongs to the MsrB Met sulfoxide reductase family. The cofactor is Zn(2+).

It carries out the reaction L-methionyl-[protein] + [thioredoxin]-disulfide + H2O = L-methionyl-(R)-S-oxide-[protein] + [thioredoxin]-dithiol. This Methanosarcina barkeri (strain Fusaro / DSM 804) protein is Peptide methionine sulfoxide reductase MsrB.